Consider the following 140-residue polypeptide: Gonadotropin subunit beta-2 (140 aa).

The signal sequence occupies residues 1–24 (MSVYPECTWLLFVCLCHLLVSAGG). Cystine bridges form between cysteine 30/cysteine 78, cysteine 44/cysteine 93, cysteine 47/cysteine 131, cysteine 55/cysteine 109, cysteine 59/cysteine 111, and cysteine 114/cysteine 121. N-linked (GlcNAc...) asparagine glycosylation is present at asparagine 34.

The protein belongs to the glycoprotein hormones subunit beta family. In terms of assembly, heterodimer of an alpha and a beta chain.

It localises to the secreted. In terms of biological role, involved in gametogenesis and steroidogenesis. The sequence is that of Gonadotropin subunit beta-2 (cgbb) from Anguilla anguilla (European freshwater eel).